Here is a 185-residue protein sequence, read N- to C-terminus: Putative manganese efflux pump MntP (185 aa).

6 helical membrane-spanning segments follow: residues leucine 4–phenylalanine 24, isoleucine 40–alanine 60, leucine 64–leucine 84, leucine 108–methionine 128, phenylalanine 134–alanine 154, and tyrosine 165–valine 185.

This sequence belongs to the MntP (TC 9.B.29) family.

It localises to the cell membrane. Probably functions as a manganese efflux pump. This is Putative manganese efflux pump MntP from Bacillus velezensis (strain DSM 23117 / BGSC 10A6 / LMG 26770 / FZB42) (Bacillus amyloliquefaciens subsp. plantarum).